We begin with the raw amino-acid sequence, 489 residues long: Virion host shutoff protein (489 aa).

Disordered stretches follow at residues 110–135, 142–161, 285–319, and 332–364; these read EEAS…AFSN, SLAS…PSAA, RSQT…ETRV, and GYED…LTPP. The span at 124–134 shows a compositional bias: polar residues; it reads ITDSRPSSAFS.

The protein belongs to the herpesviridae VHS protein family. Interacts with human EIF4H, EIF4A1 and EIF4A2; interaction with eIF4AI and EIF4A2 presumably allows Vhs protein to associate with the eIF4F cap-binding complex.

The protein resides in the virion. Its function is as follows. Minor structural protein that acts as an endoribonuclease during lytic infection. Degrades host mRNAs in the cytoplasm by cutting them at preferred sites, including some in regions of translation initiation. Together with inhibition of host splicing by ICP27, contributes to an overall decrease in host protein synthesis. Also, after the onset of viral transcription, accelerates the turnover of viral mRNA, thereby facilitating the sequential expression of different classes of viral genes. Binds translation initiation factors eIF4H, eIF4AI, and eIF4AII, thereby may interact directly with the translation initiation complex and thus digest specifically mRNAs. Also impedes antigen presentation by major histocompatibility complex class I and class II molecules, inhibits secretion of cytokines that would otherwise recruit lymphocytes and neutrophils cells to the site of infection and blocks the activation of dendritic cells. Plays a role in the inhibition of interferon-beta activation by the cGAS/STING pathway. Mechanistically, down-regulates the expression of host cGAS/MB21D1. Also decreases the accumulation of other interferon-induced mRNAs such as host IFIT3 or CH25H to subvert their antiviral activity. In Human herpesvirus 1 (strain 17) (HHV-1), this protein is Virion host shutoff protein (UL41).